The chain runs to 51 residues: Putative ribosomal protein eL39-like 5 (51 aa).

It belongs to the eukaryotic ribosomal protein eL39 family.

In Homo sapiens (Human), this protein is Putative ribosomal protein eL39-like 5 (RPL39P5).